A 335-amino-acid chain; its full sequence is Probable nicotianamine synthase 3 (335 aa).

This sequence belongs to the nicotianamine synthase (NAS)-like family.

The enzyme catalyses 3 S-adenosyl-L-methionine = nicotianamine + 3 S-methyl-5'-thioadenosine + 3 H(+). In terms of biological role, synthesizes nicotianamine, a polyamine that is the first intermediate in the synthesis of the phytosiderophores of the mugineic acid type found in gramineae which serves as a sensor for the physiological iron status within the plant, and/or might be involved in the transport of iron. The chain is Probable nicotianamine synthase 3 (NAS3) from Hordeum vulgare (Barley).